Here is a 430-residue protein sequence, read N- to C-terminus: MSLNKCLLFALLAIVASASVSAERVRYDNYRMYKVNSENAKQLEVLKDLEGSSDSIMFLDGVHLVGADIQIIVAPHKVPDFLEILGKSEIKYELQSRDVQKSLDEIDEKVAIKGRATTAYNWAQYYELDDTYAWLQSLAQTNPGVVTLIEGGKTYQGRSILGVKITKGGETINGKAKPGIFLEAGIHAREWIAPAAATFIINQLLTSEVENIKELAENYTWYVLPHANPDGYVYTHTTNRLWRKTRTPYGSCFGADPNRNWGFHWNEVGASSSACSDTYAGPSAFSEIETLSLSKFIEGLKGKVQLYLSLHAYSQYLLYPYGHTSDLPDNVADFEKVFDASIAAVNKRYGTTYTGGNIYDAIYPAAGASVDWAYGTQDVRMAFCYELRPSSTSYLTGFKLPAEQIVPASEELLDSIVAMATEVKSLGYFD.

The signal sequence occupies residues 1–22 (MSLNKCLLFALLAIVASASVSA). The region spanning 124–423 (QYYELDDTYA…DSIVAMATEV (300 aa)) is the Peptidase M14 domain. Zn(2+)-binding residues include His-187 and Glu-190. Cysteines 252 and 275 form a disulfide. His-311 serves as a coordination point for Zn(2+). The active-site Proton donor/acceptor is the Glu-386.

This sequence belongs to the peptidase M14 family. Requires Zn(2+) as cofactor.

The protein resides in the secreted. In Drosophila melanogaster (Fruit fly), this protein is Zinc carboxypeptidase A 1.